The chain runs to 121 residues: Large ribosomal subunit protein uL18 (121 aa).

This sequence belongs to the universal ribosomal protein uL18 family. As to quaternary structure, part of the 50S ribosomal subunit; part of the 5S rRNA/L5/L18/L25 subcomplex. Contacts the 5S and 23S rRNAs.

In terms of biological role, this is one of the proteins that bind and probably mediate the attachment of the 5S RNA into the large ribosomal subunit, where it forms part of the central protuberance. This is Large ribosomal subunit protein uL18 from Bordetella avium (strain 197N).